The following is a 337-amino-acid chain: MRVLGIETSCDETGIAIYDDEKGLLANQLYSQVKLHADYGGVVPELASRDHVRKTVPLIQAALKESGLTAKDIDAVAYTAGPGLVGALLVGATIGRSLAFAWDVPAIPVHHMEGHLLAPMLEENPPEFPFVALLVSGGHTQLISVTGIGEYELLGESIDDAAGEAFDKTAKLLGLDYPGGPMLSKLASQGVEKRFVFPRPMTDRPGLDFSFSGLKTFAANTIRNNENDDQTRADIARAFEDAVVDTLMIKCKRALDQTGFTRLVMAGGVSANRTLRTRLEEMMQKRRGEVFYARPEFCTDNGAMIAYAGMVRVKGGATADLSVSVRPRWPLAELPAA.

Residues H111 and H115 each coordinate Fe cation. Substrate is bound by residues 134–138 (LVSGG), D167, G180, and N272. D300 contacts Fe cation.

The protein belongs to the KAE1 / TsaD family. Fe(2+) serves as cofactor.

It localises to the cytoplasm. It catalyses the reaction L-threonylcarbamoyladenylate + adenosine(37) in tRNA = N(6)-L-threonylcarbamoyladenosine(37) in tRNA + AMP + H(+). Required for the formation of a threonylcarbamoyl group on adenosine at position 37 (t(6)A37) in tRNAs that read codons beginning with adenine. Is involved in the transfer of the threonylcarbamoyl moiety of threonylcarbamoyl-AMP (TC-AMP) to the N6 group of A37, together with TsaE and TsaB. TsaD likely plays a direct catalytic role in this reaction. This is tRNA N6-adenosine threonylcarbamoyltransferase from Enterobacter sp. (strain 638).